A 281-amino-acid polypeptide reads, in one-letter code: 2-dehydro-3-deoxyphosphooctonate aldolase (281 aa).

This sequence belongs to the KdsA family.

It localises to the cytoplasm. It carries out the reaction D-arabinose 5-phosphate + phosphoenolpyruvate + H2O = 3-deoxy-alpha-D-manno-2-octulosonate-8-phosphate + phosphate. It functions in the pathway carbohydrate biosynthesis; 3-deoxy-D-manno-octulosonate biosynthesis; 3-deoxy-D-manno-octulosonate from D-ribulose 5-phosphate: step 2/3. Its pathway is bacterial outer membrane biogenesis; lipopolysaccharide biosynthesis. This is 2-dehydro-3-deoxyphosphooctonate aldolase from Acidithiobacillus ferrooxidans (strain ATCC 23270 / DSM 14882 / CIP 104768 / NCIMB 8455) (Ferrobacillus ferrooxidans (strain ATCC 23270)).